Consider the following 343-residue polypeptide: MTITPQEALQRTIEHREIFHDEMLHLMRLIMRGDLSPVMAAAIITGLRVKKETIGEIAAAATVMREFANHVEVQDNSNFVDIVGTGGDGSHTFNISTASMFVTAAAGAKVAKHGNRGVSSKSGSADVLEALGVNIDLQSEQVAASIAETGMGFMFAPNHHPAMKNIAAVRRELGVRTIFNILGPLTNPAGAPNQLMGVFHPDLVGIQVRVMQRLGAQHVLVVYGKDGMDEVSLGAATLVGELRDGKVHEYEIHPEDFGLQMVSNRTLKVENADESRTMLLGALDNQPGVAREIVTLNAGTALYAANIAESIADGIQLAREAIASGKARAKVDELVRFTQQFKR.

5-phospho-alpha-D-ribose 1-diphosphate contacts are provided by residues Gly-84, 87-88, Thr-92, 94-97, 112-120, and Ser-124; these read GD, NIST, and KHGNRGVSS. Gly-84 lines the anthranilate pocket. Ser-96 lines the Mg(2+) pocket. Asn-115 serves as a coordination point for anthranilate. Anthranilate is bound at residue Arg-170. Asp-229 and Glu-230 together coordinate Mg(2+).

Belongs to the anthranilate phosphoribosyltransferase family. In terms of assembly, homodimer. Requires Mg(2+) as cofactor.

The catalysed reaction is N-(5-phospho-beta-D-ribosyl)anthranilate + diphosphate = 5-phospho-alpha-D-ribose 1-diphosphate + anthranilate. The protein operates within amino-acid biosynthesis; L-tryptophan biosynthesis; L-tryptophan from chorismate: step 2/5. In terms of biological role, catalyzes the transfer of the phosphoribosyl group of 5-phosphorylribose-1-pyrophosphate (PRPP) to anthranilate to yield N-(5'-phosphoribosyl)-anthranilate (PRA). The chain is Anthranilate phosphoribosyltransferase from Burkholderia orbicola (strain AU 1054).